The sequence spans 152 residues: Aminoglycoside N(6')-acetyltransferase type 1 (152 aa).

The region spanning 5–152 is the N-acetyltransferase domain; sequence PLVRPVETTD…AQVRCFRKPL (148 aa). Residues tryptophan 26, tyrosine 73, glutamate 86, and aspartate 122 each contribute to the substrate site. Residue asparagine 127 coordinates acetyl-CoA.

Homodimer.

The catalysed reaction is kanamycin B + acetyl-CoA = N(6')-acetylkanamycin B + CoA + H(+). Its function is as follows. Catalyzes the transfer of an acetyl group from acetyl-CoA to the 6'-amino group of aminoglycoside molecules conferring resistance to antibiotics containing the purpurosamine ring including amikacin. The chain is Aminoglycoside N(6')-acetyltransferase type 1 (aacA7) from Klebsiella aerogenes (Enterobacter aerogenes).